The chain runs to 177 residues: Nucleoside triphosphate/diphosphate phosphatase (177 aa).

Arg-23 serves as the catalytic Proton donor. Asn-87, Asp-103, Asp-105, Asp-107, Asp-120, and Glu-123 together coordinate Mg(2+).

Belongs to the Ntdp family. The cofactor is Mg(2+).

It catalyses the reaction a ribonucleoside 5'-triphosphate + H2O = a ribonucleoside 5'-diphosphate + phosphate + H(+). The catalysed reaction is a ribonucleoside 5'-diphosphate + H2O = a ribonucleoside 5'-phosphate + phosphate + H(+). Its function is as follows. Has nucleoside phosphatase activity towards nucleoside triphosphates and nucleoside diphosphates. In Enterococcus faecalis (strain ATCC 700802 / V583), this protein is Nucleoside triphosphate/diphosphate phosphatase.